A 172-amino-acid polypeptide reads, in one-letter code: Protein PLASTID REDOX INSENSITIVE 2, chloroplastic (172 aa).

The N-terminal 54 residues, 1-54, are a transit peptide targeting the chloroplast; it reads MAARLWAAAVAPATLNPPLLTLSASSSPSSSRLRRSVLGRLRSRAPRPADFVCR.

Its subcellular location is the plastid. It localises to the chloroplast stroma. It is found in the chloroplast nucleoid. Required for the activity of the plastid-encoded RNA polymerase (PEP) and full expression of genes transcribed by PEP. This is Protein PLASTID REDOX INSENSITIVE 2, chloroplastic from Oryza sativa subsp. japonica (Rice).